The sequence spans 897 residues: Pre-mRNA-splicing factor CWC22 homolog (897 aa).

Residues M1–E10 are compositionally biased toward polar residues. Residues M1–I155 are disordered. Basic and acidic residues-rich tracts occupy residues S36 to S54, R93 to P107, and R131 to I155. Residues K194 to K382 enclose the MIF4G domain. A disordered region spans residues N444–T472. The segment covering I447–E466 has biased composition (acidic residues). In terms of domain architecture, MI spans A485 to M601. 2 stretches are compositionally biased toward low complexity: residues L689–S710 and D720–E730. Residues L689 to R897 form a disordered region. Basic and acidic residues predominate over residues N743–R897.

Belongs to the CWC22 family. In terms of tissue distribution, expressed in germ cells, oocytes, and sperm cells.

It is found in the nucleus. It localises to the nucleus speckle. Functionally, required for pre-mRNA splicing and for exon-junction complex (EJC) assembly. Hinders EIF4A3 from non-specifically binding RNA and escorts it to the splicing machinery to promote EJC assembly on mature mRNAs. Through its role in EJC assembly, required for nonsense-mediated mRNA decay. Plays a role in the nuclear retention of unspliced mRNAs. Plays a role in sex determination. Required for early embryogenesis and tissue differentiation. The chain is Pre-mRNA-splicing factor CWC22 homolog from Caenorhabditis elegans.